A 362-amino-acid chain; its full sequence is Chalcone synthase A (362 aa).

Residue cysteine 168 is part of the active site.

This sequence belongs to the thiolase-like superfamily. Chalcone/stilbene synthases family.

The catalysed reaction is (E)-4-coumaroyl-CoA + 3 malonyl-CoA + 3 H(+) = 2',4,4',6'-tetrahydroxychalcone + 3 CO2 + 4 CoA. It participates in secondary metabolite biosynthesis; flavonoid biosynthesis. The primary product of this enzyme is 4,2',4',6'-tetrahydroxychalcone (also termed naringenin-chalcone or chalcone) which can under specific conditions spontaneously isomerize into naringenin. This chain is Chalcone synthase A (CHSA), found in Ipomoea trifida (Morning glory).